Consider the following 300-residue polypeptide: MAGRNQNRTASLAGIQASGHVHTFGNCTDNDMLEEDAEVYELRSRGKEKVRRSTSRDRLDDIVILTKDIQEGDTLNAVALQYCCTVADIKRVNNLISDQDFFALRSIKIPVKRFSSLTETLHPLKGRQVLHPPPVPYFQEQDTVPANDSPSSSESAGSFLKEVDRDIEQIVKCTDTKKENLNEVVSALTAQQVRFEPDNKSVHRKDPYYGADWGMGWWTAVVIMLIVGIITPVFYLLYYEILAKVDVSHHSTVDSSHLHPGLTPPSHHREMGNAIGPTKGIPVGQQDDHRLYRQDPQARD.

Residues 1–216 are Extracellular-facing; that stretch reads MAGRNQNRTA…PYYGADWGMG (216 aa). N-linked (GlcNAc...) asparagine glycosylation is found at Asn7 and Asn26. Ser55 carries the phosphoserine modification. In terms of domain architecture, LysM spans 65 to 109; that stretch reads LTKDIQEGDTLNAVALQYCCTVADIKRVNNLISDQDFFALRSIKI. The disordered stretch occupies residues 136-157; that stretch reads PYFQEQDTVPANDSPSSSESAG. Residues 140–156 are compositionally biased toward polar residues; sequence EQDTVPANDSPSSSESA. Residue Asn199 is glycosylated (N-linked (GlcNAc...) asparagine). The helical transmembrane segment at 217-237 threads the bilayer; sequence WWTAVVIMLIVGIITPVFYLL. The Cytoplasmic portion of the chain corresponds to 238–300; it reads YYEILAKVDV…LYRQDPQARD (63 aa). Residues 253 to 300 form a disordered region; that stretch reads VDSSHLHPGLTPPSHHREMGNAIGPTKGIPVGQQDDHRLYRQDPQARD. The span at 286-300 shows a compositional bias: basic and acidic residues; the sequence is QDDHRLYRQDPQARD.

It localises to the cell membrane. The protein localises to the golgi apparatus. In terms of biological role, essential for Golgi structural integrity. This Rattus norvegicus (Rat) protein is LysM and putative peptidoglycan-binding domain-containing protein 3 (Lysmd3).